Reading from the N-terminus, the 190-residue chain is Elongation factor P-like protein (190 aa).

The protein belongs to the elongation factor P family.

The protein is Elongation factor P-like protein of Shigella boydii serotype 4 (strain Sb227).